Consider the following 310-residue polypeptide: p-hydroxybenzoic acid efflux pump subunit AaeA (310 aa).

Residues 12 to 32 form a helical membrane-spanning segment; the sequence is AITVVLVILAFIAIFNAWVYY.

Belongs to the membrane fusion protein (MFP) (TC 8.A.1) family.

It is found in the cell inner membrane. Forms an efflux pump with AaeB. The sequence is that of p-hydroxybenzoic acid efflux pump subunit AaeA from Escherichia coli O8 (strain IAI1).